Reading from the N-terminus, the 514-residue chain is L-Threonine dehydratase biosynthetic IlvA (514 aa).

The residue at position 62 (Lys62) is an N6-(pyridoxal phosphate)lysine. Pyridoxal 5'-phosphate is bound by residues Asn89, 188-192 (GGGGL), and Ser315. 2 consecutive ACT-like domains span residues 339–411 (ALLA…DLSD) and 434–504 (RLYS…DESN).

Belongs to the serine/threonine dehydratase family. Homotetramer. It depends on pyridoxal 5'-phosphate as a cofactor.

The enzyme catalyses L-threonine = 2-oxobutanoate + NH4(+). It functions in the pathway amino-acid biosynthesis; L-isoleucine biosynthesis; 2-oxobutanoate from L-threonine: step 1/1. With respect to regulation, isoleucine allosterically inhibits whereas valine allosterically activates this enzyme. Functionally, catalyzes the anaerobic formation of alpha-ketobutyrate and ammonia from threonine in a two-step reaction. The first step involved a dehydration of threonine and a production of enamine intermediates (aminocrotonate), which tautomerizes to its imine form (iminobutyrate). Both intermediates are unstable and short-lived. The second step is the nonenzymatic hydrolysis of the enamine/imine intermediates to form 2-ketobutyrate and free ammonia. In the low water environment of the cell, the second step is accelerated by RidA. The protein is L-Threonine dehydratase biosynthetic IlvA (ilvA) of Salmonella typhimurium (strain LT2 / SGSC1412 / ATCC 700720).